The following is a 424-amino-acid chain: Glutamate-1-semialdehyde 2,1-aminomutase (424 aa).

The residue at position 265 (lysine 265) is an N6-(pyridoxal phosphate)lysine.

Belongs to the class-III pyridoxal-phosphate-dependent aminotransferase family. HemL subfamily. Homodimer. Pyridoxal 5'-phosphate serves as cofactor.

It localises to the cytoplasm. The enzyme catalyses (S)-4-amino-5-oxopentanoate = 5-aminolevulinate. It participates in porphyrin-containing compound metabolism; protoporphyrin-IX biosynthesis; 5-aminolevulinate from L-glutamyl-tRNA(Glu): step 2/2. The polypeptide is Glutamate-1-semialdehyde 2,1-aminomutase (Alkaliphilus oremlandii (strain OhILAs) (Clostridium oremlandii (strain OhILAs))).